The following is an 862-amino-acid chain: Probable inorganic carbon transporter subunit DabA (862 aa).

Residues cysteine 365, aspartate 367, histidine 540, and cysteine 555 each contribute to the Zn(2+) site.

Belongs to the inorganic carbon transporter (TC 9.A.2) DabA family. Forms a complex with DabB. It depends on Zn(2+) as a cofactor.

It localises to the cell inner membrane. Functionally, part of an energy-coupled inorganic carbon pump. This chain is Probable inorganic carbon transporter subunit DabA, found in Vibrio cholerae serotype O1 (strain ATCC 39315 / El Tor Inaba N16961).